We begin with the raw amino-acid sequence, 125 residues long: Cysteine proteinase inhibitor 3 (125 aa).

An N-terminal signal peptide occupies residues 1–22 (MESKTFWIVTLLLCGTIQLAIC). Positions 36-124 (GGVHDLRGNQ…KQLQEFKESS (89 aa)) constitute a Cystatin domain. Positions 80–84 (QVVAG) match the Secondary area of contact motif.

This sequence belongs to the cystatin family. Phytocystatin subfamily.

The protein resides in the secreted. Specific inhibitor of cysteine proteinases. Probably involved in the regulation of endogenous processes and in defense against pests and pathogens. This chain is Cysteine proteinase inhibitor 3 (CYS3), found in Arabidopsis thaliana (Mouse-ear cress).